The primary structure comprises 973 residues: Piwi-like protein 2 (973 aa).

The interval 28–65 (WPQASKPLDPALGRGAPAGRGHVFGKPEEPSTQRGPAQ) is disordered. Positions 34 to 48 (PLDPALGRGAPAGRG) are enriched in low complexity. The residue at position 47 (Arg-47) is a Symmetric dimethylarginine. Arg-76 and Arg-97 each carry omega-N-methylarginine; by PRMT5; alternate. Arg-76 is modified (symmetric dimethylarginine; by PRMT5; alternate). Arg-97 bears the Symmetric dimethylarginine; alternate mark. Arg-102 is subject to Symmetric dimethylarginine; by PRMT5; alternate. Arg-102 carries the post-translational modification Omega-N-methylarginine; alternate. Arg-146 and Arg-158 each carry symmetric dimethylarginine. Residues 162–199 (GISREVDKPPCTFSTPSRGPPQLSSPPALPQSPLHSPD) are disordered. Symmetric dimethylarginine; by PRMT5 is present on Arg-165. Positions 389 to 502 (CVLDVMHAIY…LLPELSFMTG (114 aa)) constitute a PAZ domain. Arg-551 carries the post-translational modification Symmetric dimethylarginine; by PRMT5. The 292-residue stretch at 668 to 959 (MVVCIIMGPR…LAFLSGHILH (292 aa)) folds into the Piwi domain. Active-site residues include Asp-745, Glu-783, Asp-815, and His-948.

It belongs to the argonaute family. Piwi subfamily. As to quaternary structure, interacts with DDX4, MAEL, EIF3A, EIF4E, EIF4G, PRMT5 and WDR77. Associates with EIF4E- and EIF4G-containing m7G cap-binding complexes. Interacts (when methylated on arginine residues) with TDRD1 and TDRKH/TDRD2. Interacts with TDRD12. Component of the PET complex, at least composed of EXD1, PIWIL2, TDRD12 and piRNAs. Interacts with MOV10L1. Interacts with GPAT2. Interacts with TEX19. Interacts with GSK3B. Interacts (via PIWI domain) with BMAL1 and CLOCK. Interacts with TEX15. The cofactor is Mg(2+). Arginine methylation by PRMT5 is required for the interaction with Tudor domain-containing protein TDRD1 and subsequent localization to the meiotic nuage, also named P granule. Expressed in adult testis and in most tumors.

It localises to the cytoplasm. Functionally, endoribonuclease that plays a central role during spermatogenesis by repressing transposable elements and preventing their mobilization, which is essential for the germline integrity. Plays an essential role in meiotic differentiation of spermatocytes, germ cell differentiation and in self-renewal of spermatogonial stem cells. Acts via the piRNA metabolic process, which mediates the repression of transposable elements during meiosis by forming complexes composed of piRNAs and Piwi proteins and govern the methylation and subsequent repression of transposons. During piRNA biosynthesis, plays a key role in the piRNA amplification loop, also named ping-pong amplification cycle, by acting as a 'slicer-competent' piRNA endoribonuclease that cleaves primary piRNAs, which are then loaded onto 'slicer-incompetent' PIWIL4. PIWIL2 slicing produces a pre-miRNA intermediate, which is then processed in mature piRNAs, and as well as a 16 nucleotide by-product that is degraded. Required for PIWIL4/MIWI2 nuclear localization and association with secondary piRNAs antisense. Besides their function in transposable elements repression, piRNAs are probably involved in other processes during meiosis such as translation regulation. Indirectly modulates expression of genes such as PDGFRB, SLC2A1, ITGA6, GJA7, THY1, CD9 and STRA8. When overexpressed, acts as an oncogene by inhibition of apoptosis and promotion of proliferation in tumors. Represses circadian rhythms by promoting the stability and activity of core clock components BMAL1 and CLOCK by inhibiting GSK3B-mediated phosphorylation and ubiquitination-dependent degradation of these proteins. The chain is Piwi-like protein 2 (PIWIL2) from Homo sapiens (Human).